We begin with the raw amino-acid sequence, 548 residues long: CTL-like protein DDB_G0288717 (548 aa).

Residues 1–44 are disordered; that stretch reads MWAPEEDYKQPLLTNSRVANNGNNNNSNGRGGSSSPSTRLQPEH. N25 carries an N-linked (GlcNAc...) asparagine glycan. Residues 52–72 traverse the membrane as a helical segment; that stretch reads ILFTILFLLVIGGMAAISGIA. Residue N97 is glycosylated (N-linked (GlcNAc...) asparagine). The next 4 membrane-spanning stretches (helical) occupy residues 125–145, 151–171, 184–204, and 226–246; these read DILI…IQLL, FFIY…GGLF, MIVG…IVYL, and PSVF…IAYW. The N-linked (GlcNAc...) asparagine glycan is linked to N273. 2 consecutive transmembrane segments (helical) span residues 290 to 310 and 350 to 370; these read NLMY…SAVF and FGSL…AFML. N377 is a glycosylation site (N-linked (GlcNAc...) asparagine). The next 3 membrane-spanning stretches (helical) occupy residues 381–401, 442–462, and 479–499; these read KLVV…ESIV, FIGG…SALF, and IALS…IVGI. The N-linked (GlcNAc...) asparagine glycan is linked to N544.

Belongs to the CTL (choline transporter-like) family.

Its subcellular location is the membrane. The chain is CTL-like protein DDB_G0288717 from Dictyostelium discoideum (Social amoeba).